The following is a 343-amino-acid chain: MRLIEKVWFNDHPAKWLLVPMLLPLSALFWLISTLRRLSYKIGLSRSCQLSKPVIVVGNIGVGGNGKTPIVLYLVELTRLLGLTPGVISRGYGGKAPHYPYLLDEKSTSIEAGDEPILIQQRCQVPIAVGSDRIASAKLLIAQGCDIIISDDGLQHYRLARDLELVVVDGKRLFGNGLLLPAGPLREGLWRLPKSDLVIYNGKNDQDYQEKNYPCMHMTLAATELCNLLTGERIYLTDFIRLNDSVNAIAGIGAPQRFFDTLKEHQFKVINQQSFVDHHAFVLADFNEFDDNIPLLMTEKDAVKCHDFCKENWWYLPVDATFSDADRQLIIDRTQIAVQSVIQ.

61–68 (GVGGNGKT) contacts ATP.

It belongs to the LpxK family.

It catalyses the reaction a lipid A disaccharide + ATP = a lipid IVA + ADP + H(+). Its pathway is glycolipid biosynthesis; lipid IV(A) biosynthesis; lipid IV(A) from (3R)-3-hydroxytetradecanoyl-[acyl-carrier-protein] and UDP-N-acetyl-alpha-D-glucosamine: step 6/6. Transfers the gamma-phosphate of ATP to the 4'-position of a tetraacyldisaccharide 1-phosphate intermediate (termed DS-1-P) to form tetraacyldisaccharide 1,4'-bis-phosphate (lipid IVA). The sequence is that of Tetraacyldisaccharide 4'-kinase from Colwellia psychrerythraea (strain 34H / ATCC BAA-681) (Vibrio psychroerythus).